We begin with the raw amino-acid sequence, 667 residues long: Phosphomethylpyrimidine synthase (667 aa).

Residues Asn235, Met264, Tyr293, His329, 349–351 (SRG), 390–393 (DGMR), and Glu429 contribute to the substrate site. His433 serves as a coordination point for Zn(2+). A substrate-binding site is contributed by Tyr456. His497 serves as a coordination point for Zn(2+). [4Fe-4S] cluster-binding residues include Cys577, Cys580, and Cys585. The disordered stretch occupies residues 618–642 (DSYTGSESDTAKRASQREQGMAQMS).

This sequence belongs to the ThiC family. As to quaternary structure, homodimer. It depends on [4Fe-4S] cluster as a cofactor.

The enzyme catalyses 5-amino-1-(5-phospho-beta-D-ribosyl)imidazole + S-adenosyl-L-methionine = 4-amino-2-methyl-5-(phosphooxymethyl)pyrimidine + CO + 5'-deoxyadenosine + formate + L-methionine + 3 H(+). The protein operates within cofactor biosynthesis; thiamine diphosphate biosynthesis. Catalyzes the synthesis of the hydroxymethylpyrimidine phosphate (HMP-P) moiety of thiamine from aminoimidazole ribotide (AIR) in a radical S-adenosyl-L-methionine (SAM)-dependent reaction. This chain is Phosphomethylpyrimidine synthase, found in Shewanella pealeana (strain ATCC 700345 / ANG-SQ1).